A 237-amino-acid polypeptide reads, in one-letter code: MAQLDAQAIINYIGTAPKKTPVKVYVKGTDLKALTFPAEVEAFVEQTTGVLFGDWQVLKPFLAEHEADFAAVRVENAARNSAVPLLDLKEVNARIEPGATIRDQVLIGDNAVIMMGAVINIGAEIGEGTMIDMGAILGGRALVGKHCHIGAGTVLAGVVEPASAEPVRIDDDVLIGANAVVIEGVHVGEGAVVAAGAVVTQDVAPHTVVAGVPARYIKDVDEQTDSKTGLEDDLRKL.

Belongs to the transferase hexapeptide repeat family. DapH subfamily.

It catalyses the reaction (S)-2,3,4,5-tetrahydrodipicolinate + acetyl-CoA + H2O = L-2-acetamido-6-oxoheptanedioate + CoA. Its pathway is amino-acid biosynthesis; L-lysine biosynthesis via DAP pathway; LL-2,6-diaminopimelate from (S)-tetrahydrodipicolinate (acetylase route): step 1/3. In terms of biological role, catalyzes the transfer of an acetyl group from acetyl-CoA to tetrahydrodipicolinate. This is 2,3,4,5-tetrahydropyridine-2,6-dicarboxylate N-acetyltransferase from Limosilactobacillus fermentum (strain NBRC 3956 / LMG 18251) (Lactobacillus fermentum).